The primary structure comprises 415 residues: Beta-1,4-glucuronyltransferase 1 (415 aa).

The Cytoplasmic portion of the chain corresponds to 1–8 (MQMSYAIR). The helical; Signal-anchor for type II membrane protein transmembrane segment at 9–36 (CAFYQLLLAALMLVAMLQLLYLSLLSGL) threads the bilayer. Residues 37–415 (HGQEEQEQYF…ARYPNSPHRC (379 aa)) are Lumenal-facing. Residue asparagine 204 is glycosylated (N-linked (GlcNAc...) asparagine). Mn(2+) is bound by residues aspartate 227 and aspartate 229. N-linked (GlcNAc...) asparagine glycosylation occurs at asparagine 300.

It belongs to the glycosyltransferase 49 family. Interacts with LARGE1 and LARGE2. Mn(2+) is required as a cofactor.

The protein resides in the golgi apparatus membrane. It catalyses the reaction 3-O-[beta-D-Xyl-(1-&gt;4)-Rib-ol-P-Rib-ol-P-3-beta-D-GalNAc-(1-&gt;3)-beta-D-GlcNAc-(1-&gt;4)-(O-6-P-alpha-D-Man)]-Thr-[protein] + UDP-alpha-D-glucuronate = 3-O-[beta-D-GlcA-(1-&gt;3)-beta-D-Xyl-(1-&gt;4)-Rib-ol-P-Rib-ol-P-3-beta-D-GalNAc-(1-&gt;3)-beta-D-GlcNAc-(1-&gt;4)-(O-6-P-alpha-D-Man)]-Thr-[protein] + UDP + H(+). The protein operates within protein modification; protein glycosylation. Beta-1,4-glucuronyltransferase involved in O-mannosylation of alpha-dystroglycan (DAG1). Transfers a glucuronic acid (GlcA) residue onto a xylose (Xyl) acceptor to produce the glucuronyl-beta-1,4-xylose-beta disaccharide primer, which is further elongated by LARGE1, during synthesis of phosphorylated O-mannosyl glycan. Phosphorylated O-mannosyl glycan is a carbohydrate structure present in alpha-dystroglycan (DAG1), which is required for binding laminin G-like domain-containing extracellular proteins with high affinity. Required for axon guidance; via its function in O-mannosylation of alpha-dystroglycan (DAG1). This Mus musculus (Mouse) protein is Beta-1,4-glucuronyltransferase 1.